A 1287-amino-acid chain; its full sequence is DNA-directed RNA polymerase subunit beta (1287 aa).

Belongs to the RNA polymerase beta chain family. The RNAP catalytic core consists of 2 alpha, 1 beta, 1 beta' and 1 omega subunit. When a sigma factor is associated with the core the holoenzyme is formed, which can initiate transcription.

It carries out the reaction RNA(n) + a ribonucleoside 5'-triphosphate = RNA(n+1) + diphosphate. Functionally, DNA-dependent RNA polymerase catalyzes the transcription of DNA into RNA using the four ribonucleoside triphosphates as substrates. This Mycoplasma capricolum subsp. capricolum (strain California kid / ATCC 27343 / NCTC 10154) protein is DNA-directed RNA polymerase subunit beta.